The primary structure comprises 228 residues: uncharacterized protein (228 aa).

The interval 1–34 (MPRDTKPYSRPANAPRPGVKTERSNQFKAASTKY) is disordered.

This is an uncharacterized protein from Orgyia pseudotsugata (Douglas-fir tussock moth).